Reading from the N-terminus, the 904-residue chain is Phosphoenolpyruvate carboxylase (904 aa).

Residues 52-71 form a disordered region; it reads ISRRESDAPPSTLSEQLTGR. Over residues 60-70 the composition is skewed to polar residues; sequence PPSTLSEQLTG. Residues H151 and K570 contribute to the active site.

It belongs to the PEPCase type 1 family. Mg(2+) serves as cofactor.

It catalyses the reaction oxaloacetate + phosphate = phosphoenolpyruvate + hydrogencarbonate. Its function is as follows. Forms oxaloacetate, a four-carbon dicarboxylic acid source for the tricarboxylic acid cycle. This chain is Phosphoenolpyruvate carboxylase, found in Xanthomonas euvesicatoria pv. vesicatoria (strain 85-10) (Xanthomonas campestris pv. vesicatoria).